The following is a 341-amino-acid chain: Serpentine receptor class beta-1 (341 aa).

7 consecutive transmembrane segments (helical) span residues 22–42 (AQFW…IFLL), 66–86 (FLFA…PLFI), 102–122 (GQLS…GFSI), 141–161 (LGPL…FTVF), 188–208 (CWIL…ILLV), 240–260 (LIVS…TIFI), and 279–299 (GVYI…IKAL).

The protein belongs to the nematode receptor-like protein srb family.

Its subcellular location is the membrane. In Caenorhabditis elegans, this protein is Serpentine receptor class beta-1 (srb-1).